We begin with the raw amino-acid sequence, 376 residues long: Transcription initiation factor IIA subunit 1 (376 aa).

At Ala2 the chain carries N-acetylalanine. Low complexity-rich tracts occupy residues 69–79 (QVQQQHQPQQQ) and 89–105 (QAQP…TQQV). Disordered stretches follow at residues 69-107 (QVQQ…QVLI), 247-266 (QAQI…AQTQ), and 274-329 (DGTG…QELF). Phosphoserine; by TAF1 occurs at positions 280, 281, 316, and 321. Residues 280–329 (SSEEDEDEEEDYDDDEEEDKEKDGAEDGQVEEEPLNSEDDVSDEEGQELF) are compositionally biased toward acidic residues. Residues His343 and Arg344 each coordinate DNA.

It belongs to the TFIIA subunit 1 family. TFIIA is a heterodimer of the large unprocessed subunit 1 and a small subunit gamma. It was originally believed to be a heterotrimer of an alpha (p35), a beta (p19) and a gamma subunit (p12). TFIIA forms a complex with TBP. Part of TBP-based Pol II pre-initiation complex (PIC), in which Pol II core assembles with general transcription factors and other specific initiation factors including GTF2E1, GTF2E2, GTF2F1, GTF2F2, TCEA1, ERCC2, ERCC3, GTF2H2, GTF2H3, GTF2H4, GTF2H5, GTF2A1, GTF2A2, GTF2B and TBP; this large multi-subunit PIC complex mediates DNA unwinding and targets Pol II core to the transcription start site where the first phosphodiester bond forms. Post-translationally, the alpha and beta subunits are postranslationally produced from the precursor form by TASP1. The cleavage promotes proteasomal degradation.

It localises to the nucleus. Functionally, TFIIA is a component of the transcription machinery of RNA polymerase II and plays an important role in transcriptional activation. TFIIA in a complex with TBP mediates transcriptional activity. This chain is Transcription initiation factor IIA subunit 1 (GTF2A1), found in Homo sapiens (Human).